We begin with the raw amino-acid sequence, 188 residues long: NADH-quinone oxidoreductase subunit B 1 (188 aa).

Residues Cys32, Cys33, Cys98, and Cys128 each contribute to the [4Fe-4S] cluster site. Positions 153–188 are disordered; it reads VGGVSRPDALASPADALPPRAADSLTAPPVRPPDPS. Residues 157–177 are compositionally biased toward low complexity; that stretch reads SRPDALASPADALPPRAADSL.

This sequence belongs to the complex I 20 kDa subunit family. In terms of assembly, NDH-1 is composed of 14 different subunits. Subunits NuoB, C, D, E, F, and G constitute the peripheral sector of the complex. [4Fe-4S] cluster serves as cofactor.

The protein localises to the cell membrane. It carries out the reaction a quinone + NADH + 5 H(+)(in) = a quinol + NAD(+) + 4 H(+)(out). Functionally, NDH-1 shuttles electrons from NADH, via FMN and iron-sulfur (Fe-S) centers, to quinones in the respiratory chain. The immediate electron acceptor for the enzyme in this species is believed to be a menaquinone. Couples the redox reaction to proton translocation (for every two electrons transferred, four hydrogen ions are translocated across the cytoplasmic membrane), and thus conserves the redox energy in a proton gradient. This is NADH-quinone oxidoreductase subunit B 1 (nuoB1) from Salinispora tropica (strain ATCC BAA-916 / DSM 44818 / JCM 13857 / NBRC 105044 / CNB-440).